The sequence spans 203 residues: Secreted phosphoprotein 24 (203 aa).

Positions 1-23 (MEKMAMKMLVIFVLGMNHWTCTG) are cleaved as a signal peptide. Disulfide bonds link Cys-86/Cys-97 and Cys-110/Cys-128. Ser-90 bears the Phosphoserine mark. Phosphoserine is present on residues Ser-138, Ser-139, Ser-166, and Ser-175.

The protein belongs to the SPP2 family. In terms of processing, multiply phosphorylated at serine residues in Ser-X-Glu/Ser(P) sequences, a recognition motif for phosphorylation by secretory pathway protein kinase. Phosphorylation sites are present in the extracellular medium. In liver and bone but not in heart, lung, kidney, or spleen.

The protein localises to the secreted. Could coordinate an aspect of bone turnover. This Bos taurus (Bovine) protein is Secreted phosphoprotein 24 (SPP2).